The chain runs to 894 residues: Protein SEY1 (894 aa).

The interval 1–64 (MGLDVDSVPI…PRALEPAQVT (64 aa)) is disordered. At 1–768 (MGLDVDSVPI…KRGTVSSMSQ (768 aa)) the chain is on the cytoplasmic side. Low complexity predominate over residues 9-24 (PIAEAAAPSSMAATEP). Polar residues predominate over residues 40 to 53 (APMNTDSSRETMPT). Residues 137-359 (GFGYDICAVL…DESYVFKTEY (223 aa)) enclose the GB1/RHD3-type G domain. 147–154 (GSQSTGKS) provides a ligand contact to GTP. Positions 536 to 559 (KVDDERAQLLDELHTLARTLRANE) form a coiled coil. Residues 769-789 (VPIWMYGVLVVLGWNEAMAVL) form a helical membrane-spanning segment. Over 790–792 (RNP) the chain is Lumenal. Residues 793 to 813 (VYFTLLCMVLATAYVIWRLNL) traverse the membrane as a helical segment. Residues 814-894 (GTPVLALASG…DSHPRLPASF (81 aa)) lie on the Cytoplasmic side of the membrane. A disordered region spans residues 841–894 (DGTPPSANRAREYRVPSGSTAHVSEKTPHRPLTTSGAAEADTVEDSHPRLPASF).

This sequence belongs to the TRAFAC class dynamin-like GTPase superfamily. GB1/RHD3 GTPase family. RHD3 subfamily.

It is found in the endoplasmic reticulum membrane. In terms of biological role, cooperates with the reticulon proteins and tubule-shaping DP1 family proteins to generate and maintain the structure of the tubular endoplasmic reticulum network. Has GTPase activity, which is required for its function in ER organization. The protein is Protein SEY1 of Malassezia globosa (strain ATCC MYA-4612 / CBS 7966) (Dandruff-associated fungus).